An 80-amino-acid polypeptide reads, in one-letter code: Putative UPF0377 protein YMR324C (80 aa).

The chain crosses the membrane as a helical span at residues 13–33 (ACIFIDSVCEGIVFWGLCLFV).

It belongs to the UPF0377 family.

The protein resides in the membrane. This chain is Putative UPF0377 protein YMR324C, found in Saccharomyces cerevisiae (strain ATCC 204508 / S288c) (Baker's yeast).